The primary structure comprises 186 residues: MLFYHGSRSPYPWSLCWLDEFADPTTARKLYNAAFPLVDVTVVPDDEIVQHRRVALLELIQKHIRQRDLMGLIDQLVVLLVTECANDSQITALLNYILLTGDEARFNEFISELTRRMPQHRERIMTIAERIHNDGYIKGEQRILRLLLQNGADPEWIQKITGLSAEQMQALRQPLPERERYSWLKS.

It belongs to the Rpn/YhgA-like nuclease family.

This pseudogene is the C-terminal fragment of low activity DNA endonuclease RpnD which probably yields 3'-hydroxyl ends. The intact protein can be seen in this entry (AC B7NGZ6). Expression of the repaired protein increases the frequency of recA-independent recombination, but also decreases viability probably via DNA damage; in a RecA strain expression has no effect on viability but does induce the SOS repair response. May play a role in horizontal gene transfer. In Escherichia coli (strain K12), this protein is Putative inactive recombination-promoting nuclease-like protein YjiQ (yjiQ).